The sequence spans 195 residues: Imidazoleglycerol-phosphate dehydratase (195 aa).

Belongs to the imidazoleglycerol-phosphate dehydratase family.

The protein localises to the cytoplasm. It catalyses the reaction D-erythro-1-(imidazol-4-yl)glycerol 3-phosphate = 3-(imidazol-4-yl)-2-oxopropyl phosphate + H2O. It functions in the pathway amino-acid biosynthesis; L-histidine biosynthesis; L-histidine from 5-phospho-alpha-D-ribose 1-diphosphate: step 6/9. The polypeptide is Imidazoleglycerol-phosphate dehydratase (Methylobacterium radiotolerans (strain ATCC 27329 / DSM 1819 / JCM 2831 / NBRC 15690 / NCIMB 10815 / 0-1)).